A 214-amino-acid chain; its full sequence is Putative ras-related protein Rab-5B (214 aa).

Position 56–63 (Gly56–Thr63) interacts with GTP. The Effector region signature appears at Thr77–Phe85. GTP-binding positions include Asp103–Gln107 and Asn161–Asp164.

This sequence belongs to the small GTPase superfamily. Rab family. Post-translationally, this sequence lacks the C-terminal cysteine motifs subject to isoprenylation in other Rab proteins.

The polypeptide is Putative ras-related protein Rab-5B (rab5B) (Dictyostelium discoideum (Social amoeba)).